A 189-amino-acid chain; its full sequence is ATP synthase subunit b (189 aa).

A helical membrane pass occupies residues 25–45 (LPVWPEVVIGLICFGIVFFVF).

Belongs to the ATPase B chain family. As to quaternary structure, F-type ATPases have 2 components, F(1) - the catalytic core - and F(0) - the membrane proton channel. F(1) has five subunits: alpha(3), beta(3), gamma(1), delta(1), epsilon(1). F(0) has three main subunits: a(1), b(2) and c(10-14). The alpha and beta chains form an alternating ring which encloses part of the gamma chain. F(1) is attached to F(0) by a central stalk formed by the gamma and epsilon chains, while a peripheral stalk is formed by the delta and b chains.

The protein localises to the cell membrane. F(1)F(0) ATP synthase produces ATP from ADP in the presence of a proton or sodium gradient. F-type ATPases consist of two structural domains, F(1) containing the extramembraneous catalytic core and F(0) containing the membrane proton channel, linked together by a central stalk and a peripheral stalk. During catalysis, ATP synthesis in the catalytic domain of F(1) is coupled via a rotary mechanism of the central stalk subunits to proton translocation. Its function is as follows. Component of the F(0) channel, it forms part of the peripheral stalk, linking F(1) to F(0). This Streptomyces griseus subsp. griseus (strain JCM 4626 / CBS 651.72 / NBRC 13350 / KCC S-0626 / ISP 5235) protein is ATP synthase subunit b.